Reading from the N-terminus, the 626-residue chain is Probable potassium transport system protein Kup (626 aa).

A run of 13 helical transmembrane segments spans residues 8 to 28, 44 to 64, 102 to 122, 139 to 159, 171 to 191, 196 to 216, 217 to 237, 249 to 269, 281 to 301, 339 to 359, 377 to 397, 399 to 419, and 421 to 441; these read VALP…IGTS, ISEA…TLSI, IYLI…GIIT, PAFD…LFMV, FGPI…YSII, ILWF…PFVA, FVAM…YADM, WFIV…ALLL, LLVP…AAVI, IYVP…IILF, MLCV…WPWW, VTLF…STSL, and ILSG…ILMT.

Belongs to the HAK/KUP transporter (TC 2.A.72) family.

The protein localises to the cell inner membrane. It catalyses the reaction K(+)(in) + H(+)(in) = K(+)(out) + H(+)(out). In terms of biological role, transport of potassium into the cell. Likely operates as a K(+):H(+) symporter. This chain is Probable potassium transport system protein Kup, found in Acinetobacter baylyi (strain ATCC 33305 / BD413 / ADP1).